A 412-amino-acid chain; its full sequence is Argininosuccinate synthase (412 aa).

Residues 10–18 (AYSGGLDTS) and alanine 36 contribute to the ATP site. Residues tyrosine 87 and serine 92 each coordinate L-citrulline. Residue tyrosine 87 is modified to Phosphotyrosine. N6-acetyllysine is present on lysine 112. Position 113 is a phosphotyrosine (tyrosine 113). 115–123 (SHGATGKGN) is a binding site for ATP. Positions 119, 123, and 124 each coordinate L-aspartate. Asparagine 123 is a binding site for L-citrulline. Arginine 127 contacts L-citrulline. Lysine 165 and lysine 176 each carry N6-acetyllysine; by CLOCK. 2 residues coordinate L-citrulline: serine 180 and serine 189. Phosphoserine is present on serine 180. A Phosphoserine modification is found at serine 219. L-citrulline is bound by residues glutamate 270 and tyrosine 282.

Belongs to the argininosuccinate synthase family. Type 1 subfamily. In terms of assembly, homotetramer. Interacts with NMRAL1. Interacts with CLOCK; in a circadian manner. Forms tissue-specific complexes with ASL, SLC7A1, HSP90AA1 and nitric oxide synthase NOS1, NOS2 or NOS3; the complex regulates cell-autonomous L-arginine synthesis and citrulline recycling while channeling extracellular L-arginine to nitric oxide synthesis pathway. Acetylated by CLOCK in a circadian manner which negatively regulates its enzyme activity. Deacetylated by histone deacetylases.

Its subcellular location is the cytoplasm. It localises to the cytosol. It catalyses the reaction L-citrulline + L-aspartate + ATP = 2-(N(omega)-L-arginino)succinate + AMP + diphosphate + H(+). It participates in amino-acid biosynthesis; L-arginine biosynthesis; L-arginine from L-ornithine and carbamoyl phosphate: step 2/3. Its pathway is nitrogen metabolism; urea cycle; (N(omega)-L-arginino)succinate from L-aspartate and L-citrulline: step 1/1. One of the enzymes of the urea cycle, the metabolic pathway transforming neurotoxic amonia produced by protein catabolism into inocuous urea in the liver of ureotelic animals. Catalyzes the formation of arginosuccinate from aspartate, citrulline and ATP and together with ASL it is responsible for the biosynthesis of arginine in most body tissues. In Bos taurus (Bovine), this protein is Argininosuccinate synthase.